The primary structure comprises 448 residues: Glutamyl-tRNA reductase (448 aa).

Residues T49–R52, S109, E114–Q116, and Q120 contribute to the substrate site. C50 acts as the Nucleophile in catalysis. NADP(+) is bound at residue G189–S194.

This sequence belongs to the glutamyl-tRNA reductase family. In terms of assembly, homodimer.

The enzyme catalyses (S)-4-amino-5-oxopentanoate + tRNA(Glu) + NADP(+) = L-glutamyl-tRNA(Glu) + NADPH + H(+). Its pathway is porphyrin-containing compound metabolism; protoporphyrin-IX biosynthesis; 5-aminolevulinate from L-glutamyl-tRNA(Glu): step 1/2. Functionally, catalyzes the NADPH-dependent reduction of glutamyl-tRNA(Glu) to glutamate 1-semialdehyde (GSA). This Staphylococcus aureus (strain NCTC 8325 / PS 47) protein is Glutamyl-tRNA reductase.